A 346-amino-acid chain; its full sequence is tRNA-specific 2-thiouridylase MnmA (346 aa).

ATP is bound at residue 6–13 (AMSGGTDS). Catalysis depends on cysteine 90, which acts as the Nucleophile. Cysteine 90 and cysteine 187 form a disulfide bridge. Glycine 114 is a binding site for ATP. The interaction with tRNA stretch occupies residues 137-139 (KDQ). Cysteine 187 acts as the Cysteine persulfide intermediate in catalysis. The segment at 292–293 (RY) is interaction with tRNA.

This sequence belongs to the MnmA/TRMU family.

Its subcellular location is the cytoplasm. The catalysed reaction is S-sulfanyl-L-cysteinyl-[protein] + uridine(34) in tRNA + AH2 + ATP = 2-thiouridine(34) in tRNA + L-cysteinyl-[protein] + A + AMP + diphosphate + H(+). Catalyzes the 2-thiolation of uridine at the wobble position (U34) of tRNA, leading to the formation of s(2)U34. The sequence is that of tRNA-specific 2-thiouridylase MnmA from Nitratidesulfovibrio vulgaris (strain DP4) (Desulfovibrio vulgaris).